Reading from the N-terminus, the 82-residue chain is uncharacterized protein (82 aa).

The 2Fe-2S ferredoxin-type domain maps to 1–82; it reads MKIHLIRHNT…HVESDIEIDL (82 aa). Residues Cys-35, Cys-40, Cys-43, and Cys-72 each coordinate [2Fe-2S] cluster.

It depends on [2Fe-2S] cluster as a cofactor.

This is an uncharacterized protein from Haemophilus influenzae (strain ATCC 51907 / DSM 11121 / KW20 / Rd).